The chain runs to 435 residues: Endosome-associated-trafficking regulator 1 (435 aa).

A phosphoserine mark is found at serine 18 and serine 147. 2 disordered regions span residues 136–185 (ASRH…TGWS) and 225–251 (ESLP…PSAD). Acidic residues predominate over residues 173–182 (LLDEEEDEDT). Positions 173–198 (LLDEEEDEDTGWSGAYLPSAIEQTHP) are required for interaction with PTPN13. The span at 240-250 (SPASPAGSPSA) shows a compositional bias: low complexity. Phosphoserine is present on residues serine 243 and serine 247. Positions 261–371 (DRHLRTLQIS…FQRENEALRC (111 aa)) form a coiled coil.

Belongs to the ENTR1 family. Found in a complex with ENTR1, PTPN13 and GIT1. Interacts with PTPN13 (via the FERM domain). Interacts (via N-terminus) with GIT1 (via N- and C-terminus); this interaction is direct. Interacts with NOD2. Interacts (via N-terminus) with IFT88. Interacts with VPS35. Post-translationally, phosphorylated. As to expression, expressed in the colon (at protein level).

The protein resides in the cytoplasm. Its subcellular location is the early endosome. The protein localises to the endosome. It is found in the recycling endosome. It localises to the midbody. The protein resides in the cytoskeleton. Its subcellular location is the microtubule organizing center. The protein localises to the centrosome. It is found in the cilium basal body. Its function is as follows. Endosome-associated protein that plays a role in membrane receptor sorting, cytokinesis and ciliogenesis. Involved in the endosome-to-plasma membrane trafficking and recycling of SNX27-retromer-dependent cargo proteins, such as GLUT1. Involved in the regulation of cytokinesis; the function may involve PTPN13 and GIT1. Plays a role in the formation of cilia. Involved in cargo protein localization, such as PKD2, at primary cilia. Involved in the presentation of the tumor necrosis factor (TNF) receptor TNFRSF1A on the cell surface, and hence in the modulation of the TNF-induced apoptosis. The polypeptide is Endosome-associated-trafficking regulator 1 (Homo sapiens (Human)).